The sequence spans 133 residues: Profilin-1 (133 aa).

Cysteine 95 and cysteine 117 form a disulfide bridge.

It belongs to the profilin family. In terms of assembly, dimer and tetramer. Occurs in many kinds of cells as a complex with monomeric actin in a 1:1 ratio.

The protein resides in the cytoplasm. Its subcellular location is the cytoskeleton. In terms of biological role, binds to actin and affects the structure of the cytoskeleton. At high concentrations, profilin prevents the polymerization of actin, whereas it enhances it at low concentrations. By binding to PIP2, it inhibits the formation of IP3 and DG. Possesses high binding affinity for poly(L-proline). The sequence is that of Profilin-1 from Artemisia vulgaris (Mugwort).